The following is a 319-amino-acid chain: tRNA dimethylallyltransferase (319 aa).

9–16 (GPTAVGKS) contacts ATP. 11–16 (TAVGKS) is a substrate binding site. The segment at 39–42 (DSMQ) is interaction with substrate tRNA.

The protein belongs to the IPP transferase family. Monomer. Requires Mg(2+) as cofactor.

It catalyses the reaction adenosine(37) in tRNA + dimethylallyl diphosphate = N(6)-dimethylallyladenosine(37) in tRNA + diphosphate. Catalyzes the transfer of a dimethylallyl group onto the adenine at position 37 in tRNAs that read codons beginning with uridine, leading to the formation of N6-(dimethylallyl)adenosine (i(6)A). The protein is tRNA dimethylallyltransferase of Thermobifida fusca (strain YX).